We begin with the raw amino-acid sequence, 121 residues long: MARIAGVNIPNHKHTVIGLTAIYGIGRSRARKICEATGIPTDKKVKDLTDPDQDALRKEIEKFLVEGDLRRETTMNIKRLMDLGCYRGVRHRKGLPLRGQRTRTNARTRKGPRKAGVALKK.

The tract at residues 94 to 121 (GLPLRGQRTRTNARTRKGPRKAGVALKK) is disordered.

This sequence belongs to the universal ribosomal protein uS13 family. As to quaternary structure, part of the 30S ribosomal subunit. Forms a loose heterodimer with protein S19. Forms two bridges to the 50S subunit in the 70S ribosome.

Functionally, located at the top of the head of the 30S subunit, it contacts several helices of the 16S rRNA. In the 70S ribosome it contacts the 23S rRNA (bridge B1a) and protein L5 of the 50S subunit (bridge B1b), connecting the 2 subunits; these bridges are implicated in subunit movement. Contacts the tRNAs in the A and P-sites. The polypeptide is Small ribosomal subunit protein uS13 (Ralstonia nicotianae (strain ATCC BAA-1114 / GMI1000) (Ralstonia solanacearum)).